The sequence spans 127 residues: Large ribosomal subunit protein bL17 (127 aa).

Belongs to the bacterial ribosomal protein bL17 family. As to quaternary structure, part of the 50S ribosomal subunit. Contacts protein L32.

In Legionella pneumophila (strain Corby), this protein is Large ribosomal subunit protein bL17.